A 372-amino-acid polypeptide reads, in one-letter code: Beta-1,3-N-acetylglucosaminyltransferase radical fringe (372 aa).

Topologically, residues 1–10 (MNSSCLGLRR) are cytoplasmic. The chain crosses the membrane as a helical; Signal-anchor for type II membrane protein span at residues 11 to 27 (TCFLLSVTAAAVLLLLL). At 28-372 (PRGQPPAAPR…TIWCPNKKMS (345 aa)) the chain is on the lumenal side. Over residues 30–48 (GQPPAAPRRRPPPAGPSRP) the composition is skewed to pro residues. Positions 30 to 96 (GQPPAAPRRR…RVRMGPPGGS (67 aa)) are disordered. Over residues 64-78 (DRGGGSGAAGGGRGV) the composition is skewed to gly residues. Position 120 (arginine 120) interacts with substrate. Asparagine 159 carries N-linked (GlcNAc...) asparagine glycosylation. 2 cysteine pairs are disulfide-bonded: cysteine 160–cysteine 171 and cysteine 189–cysteine 253. Aspartate 193 provides a ligand contact to substrate. Aspartate 194 is a Mn(2+) binding site. Aspartate 283 is a catalytic residue. Residue histidine 307 coordinates Mn(2+). Residues cysteine 357 and cysteine 366 are joined by a disulfide bond.

It belongs to the glycosyltransferase 31 family. Requires Mn(2+) as cofactor.

The protein resides in the golgi apparatus membrane. It carries out the reaction 3-O-(alpha-L-fucosyl)-L-threonyl-[EGF-like domain protein] + UDP-N-acetyl-alpha-D-glucosamine = 3-O-(N-acetyl-beta-D-glucosaminyl-(1-&gt;3)-alpha-L-fucosyl)-L-threonyl-[EGF-like domain protein] + UDP + H(+). The catalysed reaction is 3-O-(alpha-L-fucosyl)-L-seryl-[EGF-like domain protein] + UDP-N-acetyl-alpha-D-glucosamine = 3-O-(N-acetyl-beta-D-glucosaminyl-(1-&gt;3)-alpha-L-fucosyl)-L-seryl-[EGF-like domain protein] + UDP + H(+). Functionally, glycosyltransferase that initiates the elongation of O-linked fucose residues attached to EGF-like repeats in the extracellular domain of Notch molecules. Plays an important role in limb outgrowth, it directs the formation and positioning of the apical ectodermal ridge (AER), one of the key organizer centers of vertebrate limb development. This Gallus gallus (Chicken) protein is Beta-1,3-N-acetylglucosaminyltransferase radical fringe (RFNG).